Here is a 334-residue protein sequence, read N- to C-terminus: Holliday junction branch migration complex subunit RuvB (334 aa).

The tract at residues 1–179 (MTHKISVLHQ…FAFTGRVDYY (179 aa)) is large ATPase domain (RuvB-L). ATP-binding positions include Leu18, Arg19, Gly60, Lys63, Thr64, Ser65, 126–128 (EDF), Arg169, Tyr179, and Arg216. Thr64 contributes to the Mg(2+) binding site. Residues 180-250 (TDEDLVSILS…VAEKALAMLL (71 aa)) are small ATPAse domain (RuvB-S). The interval 253 to 334 (NLGLNEIDIK…RNPKDRWGEE (82 aa)) is head domain (RuvB-H). DNA-binding residues include Arg308 and Arg313.

The protein belongs to the RuvB family. Homohexamer. Forms an RuvA(8)-RuvB(12)-Holliday junction (HJ) complex. HJ DNA is sandwiched between 2 RuvA tetramers; dsDNA enters through RuvA and exits via RuvB. An RuvB hexamer assembles on each DNA strand where it exits the tetramer. Each RuvB hexamer is contacted by two RuvA subunits (via domain III) on 2 adjacent RuvB subunits; this complex drives branch migration. In the full resolvosome a probable DNA-RuvA(4)-RuvB(12)-RuvC(2) complex forms which resolves the HJ.

The protein localises to the cytoplasm. It catalyses the reaction ATP + H2O = ADP + phosphate + H(+). In terms of biological role, the RuvA-RuvB-RuvC complex processes Holliday junction (HJ) DNA during genetic recombination and DNA repair, while the RuvA-RuvB complex plays an important role in the rescue of blocked DNA replication forks via replication fork reversal (RFR). RuvA specifically binds to HJ cruciform DNA, conferring on it an open structure. The RuvB hexamer acts as an ATP-dependent pump, pulling dsDNA into and through the RuvAB complex. RuvB forms 2 homohexamers on either side of HJ DNA bound by 1 or 2 RuvA tetramers; 4 subunits per hexamer contact DNA at a time. Coordinated motions by a converter formed by DNA-disengaged RuvB subunits stimulates ATP hydrolysis and nucleotide exchange. Immobilization of the converter enables RuvB to convert the ATP-contained energy into a lever motion, pulling 2 nucleotides of DNA out of the RuvA tetramer per ATP hydrolyzed, thus driving DNA branch migration. The RuvB motors rotate together with the DNA substrate, which together with the progressing nucleotide cycle form the mechanistic basis for DNA recombination by continuous HJ branch migration. Branch migration allows RuvC to scan DNA until it finds its consensus sequence, where it cleaves and resolves cruciform DNA. The chain is Holliday junction branch migration complex subunit RuvB from Chlamydia trachomatis serovar L2 (strain ATCC VR-902B / DSM 19102 / 434/Bu).